A 310-amino-acid chain; its full sequence is Olfactory receptor 5P56 (310 aa).

Topologically, residues 1–25 (MEAQNHTTVKEFILLGLTENSTLRV) are extracellular. Asn-5 and Asn-20 each carry an N-linked (GlcNAc...) asparagine glycan. The helical transmembrane segment at 26 to 46 (ILFMIFLGIYTVTLVGNFSII) threads the bilayer. The Cytoplasmic portion of the chain corresponds to 47–54 (SLIRSCPQ). The helical transmembrane segment at 55-75 (LHTPMYLFLSHLALVDIGFST) threads the bilayer. Topologically, residues 76–99 (SITPIMLTGFLGHTVTLSVAACVA) are extracellular. Cys-97 and Cys-189 are oxidised to a cystine. Residues 100 to 120 (QFCIAVTFGTVECFLLAVMAY) traverse the membrane as a helical segment. Residues 121 to 133 (DRYVAICSPLLYS) are Cytoplasmic-facing. The helical transmembrane segment at 134 to 154 (THMSPRICFLLVGASYVGGCV) threads the bilayer. Over 155 to 196 (NSGTFTSCLLILSFCGPNQIDHFFCDFPAVLKLSCSDVSIIG) the chain is Extracellular. The helical transmembrane segment at 197–217 (IIPSISAGSIIVITVFVIAVS) threads the bilayer. The Cytoplasmic portion of the chain corresponds to 218-237 (YTYILITILNMRSTEGRHKA). A helical membrane pass occupies residues 238-258 (FSTCTSHLTAVTLYYGTITFI). Topologically, residues 259 to 271 (YVMPKSNYSTAQN) are extracellular. Asn-265 is a glycosylation site (N-linked (GlcNAc...) asparagine). The helical transmembrane segment at 272 to 292 (KILSVFYTVVIPMLNPLIYSL) threads the bilayer. Residues 293–310 (RNRDVKEALRKAIIRIFP) are Cytoplasmic-facing.

This sequence belongs to the G-protein coupled receptor 1 family.

Its subcellular location is the cell membrane. Potential odorant receptor. The polypeptide is Olfactory receptor 5P56 (Mus musculus (Mouse)).